The following is a 222-amino-acid chain: MLPAQEAAKLYHTNYVRNSRAIGVLWAIFTICFAIINVVCFIQPYWIGDGVDTPQAGYFGLFHYCIGNGFSRELTCRGSFTDFSTLPSGAFKAASFFIGLSMMLIIACIVCFTLFFFCNTATVYKICAWMQLTFAACLVLGCMIFPDGWDSDEAKRMCGEKTDKYTLGACSVRWAYILAIIGILDALILSFLAVVLGNRQDSLMAEELKAENKVLLSQYSLE.

Transmembrane regions (helical) follow at residues 22-42 (IGVLWAIFTICFAIINVVCFI), 96-116 (FFIGLSMMLIIACIVCFTLFF), 126-146 (ICAWMQLTFAACLVLGCMIFP), and 177-197 (ILAIIGILDALILSFLAVVLG).

Belongs to the LHFP family. Brain-specific.

The protein resides in the membrane. The sequence is that of LHFPL tetraspan subfamily member 3 protein from Mus musculus (Mouse).